The primary structure comprises 311 residues: Glycosyltransferase 6 domain-containing protein 1 (311 aa).

The Cytoplasmic segment spans residues 1 to 5 (MKAKR). Residues 6–26 (RILLQLLTFCLFLLLLAKIHF) form a helical; Signal-anchor for type II membrane protein membrane-spanning segment. Residues 27-311 (RNHQEEELLL…KIAHHPIDTL (285 aa)) lie on the Lumenal side of the membrane. N-linked (GlcNAc...) asparagine glycosylation occurs at N77. Residues 85 to 90 (FAVGSL), 176 to 178 (NIN), and 198 to 201 (HPWW) each bind substrate. E266 serves as the catalytic Nucleophile.

The protein belongs to the glycosyltransferase 6 family. Requires Mn(2+) as cofactor.

It is found in the membrane. The polypeptide is Glycosyltransferase 6 domain-containing protein 1 (Glt6d1) (Mus musculus (Mouse)).